The following is a 124-amino-acid chain: Acidic phospholipase A2 (124 aa).

7 disulfides stabilise this stretch: Cys26–Cys116, Cys28–Cys44, Cys43–Cys95, Cys49–Cys124, Cys50–Cys88, Cys57–Cys81, and Cys75–Cys86. Residues Tyr27, Gly29, and Gly31 each coordinate Ca(2+). Residue His47 is part of the active site. Asp48 provides a ligand contact to Ca(2+). Residue Asp89 is part of the active site.

The protein belongs to the phospholipase A2 family. Group II subfamily. D49 sub-subfamily. Monomer. The cofactor is Ca(2+). In terms of tissue distribution, expressed by the venom gland.

It is found in the secreted. It catalyses the reaction a 1,2-diacyl-sn-glycero-3-phosphocholine + H2O = a 1-acyl-sn-glycero-3-phosphocholine + a fatty acid + H(+). Functionally, snake venom phospholipase A2 (PLA2) that acts in vivo as an anti-thrombotic agent. Inhibits platelet aggregation induced by ADP, arachidonic acid, and thrombin. PLA2 catalyzes the calcium-dependent hydrolysis of the 2-acyl groups in 3-sn-phosphoglycerides. This is Acidic phospholipase A2 from Gloydius halys (Chinese water mocassin).